The chain runs to 134 residues: DNA-binding protein inhibitor ID-2 (134 aa).

Residues serine 14 and serine 25 each carry the phosphoserine modification. The region spanning 23–75 is the bHLH domain; it reads SRSKTPVDDPMSLLYNMNDCYSKLKELVPSIPQNKKVSKMEILQHVIDYILDL. The Nuclear export signal motif lies at 106–115; it reads LNTDISILSL.

In terms of assembly, interacts with GATA4 and NKX2-5. Interacts with NR0B2. Interacts with CLOCK and BMAL1. Interacts with IFI204. Interacts with NEDD9/HEF1. Interacts with ASB4; this interaction promotes ID2 proteasomal degradation. Ubiquitinated in a ASB4-depedent manner, leading to proteasomal degradation. In terms of processing, phosphorylated in vitro by CDK1, PKA and PKC.

It is found in the cytoplasm. Its subcellular location is the nucleus. In terms of biological role, transcriptional regulator (lacking a basic DNA binding domain) which negatively regulates the basic helix-loop-helix (bHLH) transcription factors by forming heterodimers and inhibiting their DNA binding and transcriptional activity. Implicated in regulating a variety of cellular processes, including cellular growth, senescence, differentiation, apoptosis, angiogenesis, and neoplastic transformation. Inhibits skeletal muscle and cardiac myocyte differentiation. Regulates the circadian clock by repressing the transcriptional activator activity of the CLOCK-BMAL1 heterodimer. Restricts the CLOCK and BMAL1 localization to the cytoplasm. Plays a role in both the input and output pathways of the circadian clock: in the input component, is involved in modulating the magnitude of photic entrainment and in the output component, contributes to the regulation of a variety of liver clock-controlled genes involved in lipid metabolism. In Sus scrofa (Pig), this protein is DNA-binding protein inhibitor ID-2 (ID2).